A 647-amino-acid polypeptide reads, in one-letter code: Bifunctional enzyme CysN/CysC (647 aa).

A sulfate adenylyltransferase region spans residues 1–472 (MSHQSDLIAT…TEERAARFGQ (472 aa)). Residues 22 to 239 (KQLLRFITCG…LETVYIGSDR (218 aa)) enclose the tr-type G domain. The interval 31–38 (GSVDDGKS) is G1. Residue 31–38 (GSVDDGKS) participates in GTP binding. The interval 89–93 (GITID) is G2. The G3 stretch occupies residues 110-113 (DTPG). GTP-binding positions include 110–114 (DTPGH) and 165–168 (NKMD). The G4 stretch occupies residues 165-168 (NKMD). Residues 204–206 (SAL) are G5. The interval 473–614 (KPATVLLTGL…FPGVTAKYDV (142 aa)) is adenylyl-sulfate kinase. ATP is bound at residue 481 to 488 (GLTGSGKT).

In the C-terminal section; belongs to the APS kinase family. The protein in the N-terminal section; belongs to the TRAFAC class translation factor GTPase superfamily. Classic translation factor GTPase family. CysN/NodQ subfamily. As to quaternary structure, heterodimer composed of CysD, the smaller subunit, and CysNC.

The catalysed reaction is sulfate + ATP + H(+) = adenosine 5'-phosphosulfate + diphosphate. It carries out the reaction adenosine 5'-phosphosulfate + ATP = 3'-phosphoadenylyl sulfate + ADP + H(+). Its pathway is sulfur metabolism; hydrogen sulfide biosynthesis; sulfite from sulfate: step 1/3. It participates in sulfur metabolism; hydrogen sulfide biosynthesis; sulfite from sulfate: step 2/3. Functionally, with CysD forms the ATP sulfurylase (ATPS) that catalyzes the adenylation of sulfate producing adenosine 5'-phosphosulfate (APS) and diphosphate, the first enzymatic step in sulfur assimilation pathway. APS synthesis involves the formation of a high-energy phosphoric-sulfuric acid anhydride bond driven by GTP hydrolysis by CysN coupled to ATP hydrolysis by CysD. In terms of biological role, APS kinase catalyzes the synthesis of activated sulfate. The protein is Bifunctional enzyme CysN/CysC (cysNC) of Rhodopirellula baltica (strain DSM 10527 / NCIMB 13988 / SH1).